We begin with the raw amino-acid sequence, 647 residues long: Paraneoplastic antigen Ma6E (647 aa).

Disordered stretches follow at residues 111 to 199 (QPQG…AGGA), 227 to 254 (GAAGEAGGAGEAGAAGEAGGAGEGRAAG), 508 to 580 (AAAP…VPWG), and 608 to 647 (RGQEARKPPLEGLQTILEEPENEDEDGAGDEGQPKSSQGK). 3 stretches are compositionally biased toward gly residues: residues 122–149 (GEGGGAGEAGGVGEVGAAGEAGGTGEAG), 158–199 (GEAG…AGGA), and 227–251 (GAAGEAGGAGEAGAAGEAGGAGEGR). Positions 517–570 (PAAAQASPAQGNASEAGPGAEDAAEAASATKEAARGAPAAGEGESAPAGPEGLG) are enriched in low complexity. Over residues 625 to 636 (EEPENEDEDGAG) the composition is skewed to acidic residues.

This is Paraneoplastic antigen Ma6E from Homo sapiens (Human).